Reading from the N-terminus, the 570-residue chain is Glycine--tRNA ligase (570 aa).

2 residues coordinate substrate: arginine 95 and glutamate 159. ATP-binding positions include 191–193 (RNE), 201–206 (IRLREF), 312–313 (EV), and 426–429 (GLDR). 206–210 (FNQAE) provides a ligand contact to substrate. Position 422–426 (422–426 (EPSFG)) interacts with substrate.

It belongs to the class-II aminoacyl-tRNA synthetase family.

Its subcellular location is the cytoplasm. The enzyme catalyses tRNA(Gly) + glycine + ATP = glycyl-tRNA(Gly) + AMP + diphosphate. Catalyzes the attachment of glycine to tRNA(Gly). This chain is Glycine--tRNA ligase, found in Archaeoglobus fulgidus (strain ATCC 49558 / DSM 4304 / JCM 9628 / NBRC 100126 / VC-16).